We begin with the raw amino-acid sequence, 299 residues long: 4-hydroxybenzoate octaprenyltransferase (299 aa).

A run of 7 helical transmembrane segments spans residues 31 to 51, 54 to 74, 105 to 125, 148 to 168, 177 to 197, 241 to 261, and 277 to 297; these read IGIY…ADGL, WDVL…GCVI, VLFF…TNPL, QLPQ…AFAA, IWVL…FYAM, FGLG…FAYQ, and FLHN…DKLI.

The protein belongs to the UbiA prenyltransferase family. The cofactor is Mg(2+).

The protein resides in the cell inner membrane. The catalysed reaction is all-trans-octaprenyl diphosphate + 4-hydroxybenzoate = 4-hydroxy-3-(all-trans-octaprenyl)benzoate + diphosphate. It functions in the pathway cofactor biosynthesis; ubiquinone biosynthesis. Its function is as follows. Catalyzes the prenylation of para-hydroxybenzoate (PHB) with an all-trans polyprenyl group. Mediates the second step in the final reaction sequence of ubiquinone-8 (UQ-8) biosynthesis, which is the condensation of the polyisoprenoid side chain with PHB, generating the first membrane-bound Q intermediate 3-octaprenyl-4-hydroxybenzoate. This chain is 4-hydroxybenzoate octaprenyltransferase, found in Saccharophagus degradans (strain 2-40 / ATCC 43961 / DSM 17024).